A 307-amino-acid chain; its full sequence is Aspartate carbamoyltransferase catalytic subunit (307 aa).

Carbamoyl phosphate contacts are provided by arginine 58 and threonine 59. Residue lysine 86 participates in L-aspartate binding. 3 residues coordinate carbamoyl phosphate: arginine 108, histidine 136, and glutamine 139. 2 residues coordinate L-aspartate: arginine 169 and arginine 223. Residues glycine 264 and proline 265 each contribute to the carbamoyl phosphate site.

Belongs to the aspartate/ornithine carbamoyltransferase superfamily. ATCase family. Heterododecamer (2C3:3R2) of six catalytic PyrB chains organized as two trimers (C3), and six regulatory PyrI chains organized as three dimers (R2).

It carries out the reaction carbamoyl phosphate + L-aspartate = N-carbamoyl-L-aspartate + phosphate + H(+). The protein operates within pyrimidine metabolism; UMP biosynthesis via de novo pathway; (S)-dihydroorotate from bicarbonate: step 2/3. Catalyzes the condensation of carbamoyl phosphate and aspartate to form carbamoyl aspartate and inorganic phosphate, the committed step in the de novo pyrimidine nucleotide biosynthesis pathway. This chain is Aspartate carbamoyltransferase catalytic subunit, found in Syntrophus aciditrophicus (strain SB).